The sequence spans 270 residues: MAKVPDLFEDLKNCYSENEEYSSDIDHLSLNQKSFYDASYEPLPGDGMDKFMPLSTSKTSKTSRLNFKDSVVMAAANGKILKKRRLSLNQFITDDDLEAIANDTEEEIIKPRSATYSFQSNMKYNFMRVINHQCILNDARNQSIIRDPSGQYLMAAVLNNLDEAVKFDMAAYTSNDDSQLPVTLRISETRLFVSAQNEDEPVLLKELPETPKTIKDETSLLFFWEKHGNMDYFKSAAHPKLFIATRQEKLVHMAPGLPSVTDFQILENQS.

A propeptide spanning residues 1 to 112 (MAKVPDLFED…DTEEEIIKPR (112 aa)) is cleaved from the precursor. Residue lysine 82 is modified to N6-acetyllysine. The interval 82-86 (KKRRL) is nuclear localization signal (NLS). Phosphoserine is present on serine 87. N-linked (GlcNAc...) asparagine glycosylation is found at asparagine 102 and asparagine 141.

It belongs to the IL-1 family. Monomer. Interacts with TMED10; the interaction mediates the translocation from the cytoplasm into the ERGIC (endoplasmic reticulum-Golgi intermediate compartment) and thereby secretion. Interacts with IL1R1. Interacts with S100A13; this interaction is the first step in the export of IL1A, followed by direct translocation of this complex across the plasma membrane. Post-translationally, acetylated within its nuclear localization sequence, which impacts subcellular localization. Proteolytic processed by CAPN1 in a calcium-dependent manner. Cleavage from 31 kDa precursor to 18 kDa biologically active molecules. In terms of processing, phosphorylated. Phosphorylation greatly enhances susceptibility to digestion and promotes the conversion of pre-IL1A alpha to the biologically active IL1A.

The protein resides in the nucleus. It localises to the cytoplasm. Its subcellular location is the secreted. Its function is as follows. Cytokine constitutively present intracellularly in nearly all resting non-hematopoietic cells that plays an important role in inflammation and bridges the innate and adaptive immune systems. After binding to its receptor IL1R1 together with its accessory protein IL1RAP, forms the high affinity interleukin-1 receptor complex. Signaling involves the recruitment of adapter molecules such as MYD88, IRAK1 or IRAK4. In turn, mediates the activation of NF-kappa-B and the three MAPK pathways p38, p42/p44 and JNK pathways. Within the cell, acts as an alarmin and cell death results in its liberation in the extracellular space after disruption of the cell membrane to induce inflammation and alert the host to injury or damage. In addition to its role as a danger signal, which occurs when the cytokine is passively released by cell necrosis, directly senses DNA damage and acts as signal for genotoxic stress without loss of cell integrity. The polypeptide is Interleukin-1 alpha (IL1A) (Sus scrofa (Pig)).